A 226-amino-acid chain; its full sequence is Probable proteasome subunit beta type-1 (226 aa).

A propeptide spans Met-1 to Gly-24 (removed in mature form). Catalysis depends on Thr-25, which acts as the Nucleophile.

The protein belongs to the peptidase T1B family. The 26S proteasome consists of a 20S proteasome core and two 19S regulatory subunits. The 20S proteasome core is composed of 28 subunits that are arranged in four stacked rings, resulting in a barrel-shaped structure. The two end rings are each formed by seven alpha subunits, and the two central rings are each formed by seven beta subunits. The catalytic chamber with the active sites is on the inside of the barrel.

It is found in the cytoplasm. Its subcellular location is the nucleus. The enzyme catalyses Cleavage of peptide bonds with very broad specificity.. In terms of biological role, the proteasome is a multicatalytic proteinase complex which is characterized by its ability to cleave peptides with Arg, Phe, Tyr, Leu, and Glu adjacent to the leaving group at neutral or slightly basic pH. The proteasome has an ATP-dependent proteolytic activity. This Schizosaccharomyces pombe (strain 972 / ATCC 24843) (Fission yeast) protein is Probable proteasome subunit beta type-1 (pre3).